The chain runs to 334 residues: L-lactate dehydrogenase B chain (334 aa).

30–58 is a binding site for NAD(+); sequence GQVGMACAVSVLLKELADELALVDILEDK. Substrate contacts are provided by arginine 107, asparagine 139, and arginine 170. Residue asparagine 139 participates in NAD(+) binding. Residue histidine 194 is the Proton acceptor of the active site. Substrate is bound at residue threonine 249.

Belongs to the LDH/MDH superfamily. LDH family. In terms of assembly, homotetramer.

It localises to the cytoplasm. The catalysed reaction is (S)-lactate + NAD(+) = pyruvate + NADH + H(+). Its pathway is fermentation; pyruvate fermentation to lactate; (S)-lactate from pyruvate: step 1/1. Interconverts simultaneously and stereospecifically pyruvate and lactate with concomitant interconversion of NADH and NAD(+). The polypeptide is L-lactate dehydrogenase B chain (ldhb) (Xenopus laevis (African clawed frog)).